The sequence spans 860 residues: Leucine--tRNA ligase (860 aa).

The 'HIGH' region motif lies at 42-52 (PYPSGRLHMGH). A 'KMSKS' region motif is present at residues 619–623 (KMSKS). Lys-622 is an ATP binding site.

The protein belongs to the class-I aminoacyl-tRNA synthetase family.

It is found in the cytoplasm. The catalysed reaction is tRNA(Leu) + L-leucine + ATP = L-leucyl-tRNA(Leu) + AMP + diphosphate. The chain is Leucine--tRNA ligase from Escherichia coli (strain SE11).